A 426-amino-acid polypeptide reads, in one-letter code: Serine--tRNA ligase (426 aa).

Thr-231 to Glu-233 contacts L-serine. Residues Arg-262 to Glu-264 and Val-278 each bind ATP. Glu-285 serves as a coordination point for L-serine. Glu-349–Ser-352 serves as a coordination point for ATP. Ser-384 contacts L-serine.

Belongs to the class-II aminoacyl-tRNA synthetase family. Type-1 seryl-tRNA synthetase subfamily. As to quaternary structure, homodimer. The tRNA molecule binds across the dimer.

It is found in the cytoplasm. The catalysed reaction is tRNA(Ser) + L-serine + ATP = L-seryl-tRNA(Ser) + AMP + diphosphate + H(+). It carries out the reaction tRNA(Sec) + L-serine + ATP = L-seryl-tRNA(Sec) + AMP + diphosphate + H(+). It functions in the pathway aminoacyl-tRNA biosynthesis; selenocysteinyl-tRNA(Sec) biosynthesis; L-seryl-tRNA(Sec) from L-serine and tRNA(Sec): step 1/1. In terms of biological role, catalyzes the attachment of serine to tRNA(Ser). Is also able to aminoacylate tRNA(Sec) with serine, to form the misacylated tRNA L-seryl-tRNA(Sec), which will be further converted into selenocysteinyl-tRNA(Sec). This chain is Serine--tRNA ligase, found in Chlamydia felis (strain Fe/C-56) (Chlamydophila felis).